A 224-amino-acid chain; its full sequence is Methylamine utilization ferredoxin-type protein MauM (224 aa).

A signal peptide spans 1–41; sequence MEARMTGRRKVTRRDAMADAARAVGVACLGGFSLAALVRTA. 4Fe-4S ferredoxin-type domains follow at residues 54-84, 91-124, 133-169, and 177-208; these read ALPEQDFLAACVHCGLCVQACPYGTLSLAEW, GTPFFTPREVPCYMCKDVPCARACPTGALDRDIP, VAVLVGHETCLNYKGLNCSICVRVCPIRGDAISLEPQ, and MIPVVHSASCTGCGTCEKQCVLGHAAIRVLPR. [4Fe-4S] cluster contacts are provided by cysteine 64, cysteine 67, cysteine 70, cysteine 74, cysteine 102, cysteine 105, cysteine 110, cysteine 114, cysteine 142, cysteine 150, cysteine 153, cysteine 157, cysteine 186, cysteine 189, cysteine 192, and cysteine 196.

The protein operates within one-carbon metabolism; methylamine degradation. Its function is as follows. Involved in electron transfer. In Paracoccus denitrificans (strain Pd 1222), this protein is Methylamine utilization ferredoxin-type protein MauM (mauM).